Consider the following 185-residue polypeptide: Alkyl hydroperoxide reductase AhpD (185 aa).

Catalysis depends on C132, which acts as the Proton donor. A disulfide bridge connects residues C132 and C135. C135 (cysteine sulfenic acid (-SOH) intermediate) is an active-site residue.

It belongs to the AhpD family.

The catalysed reaction is N(6)-[(R)-dihydrolipoyl]-L-lysyl-[lipoyl-carrier protein] + a hydroperoxide = N(6)-[(R)-lipoyl]-L-lysyl-[lipoyl-carrier protein] + an alcohol + H2O. In terms of biological role, antioxidant protein with alkyl hydroperoxidase activity. Required for the reduction of the AhpC active site cysteine residues and for the regeneration of the AhpC enzyme activity. The protein is Alkyl hydroperoxide reductase AhpD of Anaeromyxobacter sp. (strain Fw109-5).